Reading from the N-terminus, the 1035-residue chain is NACHT, LRR and PYD domains-containing protein 3 (1035 aa).

The 93-residue stretch at 1 to 93 (MKMMSVRCKL…WEKAKKDQPE (93 aa)) folds into the Pyrin domain. Ser5 is subject to Phosphoserine. A disulfide bond links Cys8 and Cys106. Tyr13 is subject to Phosphotyrosine. Cys128 carries S-palmitoyl cysteine lipidation. Positions 129–132 (KKKK) are required for binding to phosphatidylinositol 4-phosphate (PtdIns4P). Phosphotyrosine occurs at positions 134 and 138. Positions 138–208 (YRRHVRSRFY…SSLKLELLFE (71 aa)) constitute an FISNA domain. The residue at position 159 (Ser159) is a Phosphoserine. Tyr166 is modified (phosphotyrosine). Thr167 lines the ATP pocket. Ser199 carries the post-translational modification Phosphoserine. An NACHT domain is found at 218–534 (HTVVFQGAAG…EFFAAMYYLL (317 aa)). 224 to 231 (GAAGIGKT) contacts ATP. Phosphoserine occurs at positions 263 and 293. Residue Lys322 forms a Glycyl lysine isopeptide (Lys-Gly) (interchain with G-Cter in ubiquitin) linkage. The residue at position 332 (Ser332) is a Phosphoserine. Residues 353–357 (LEKLQ) carry the KFERQ-like motif 1 motif. Residue Lys428 forms a Glycyl lysine isopeptide (Lys-Gly) (interchain with G-Cter in ubiquitin) linkage. His520 serves as a coordination point for ATP. A KFERQ-like motif 2 motif is present at residues 603–607 (QVRLE). A Glycyl lysine isopeptide (Lys-Gly) (interchain with G-Cter in ubiquitin) cross-link involves residue Lys689. Ser727 and Ser734 each carry phosphoserine. LRR repeat units follow at residues 741 to 761 (SLTE…RVLC), 770 to 791 (NIQR…NISS), 798 to 818 (KLVE…RLLC), 827 to 848 (NLQK…DLAL), and 855 to 875 (SLTR…QVLC). Positions 797–801 (QKLVE) match the KFERQ-like motif 3 motif. Ser805 is modified (phosphoserine). Residues Cys836, Cys837, and Cys843 are each lipidated (S-palmitoyl cysteine). Tyr860 carries the post-translational modification Phosphotyrosine. Lys877 participates in a covalent cross-link: Glycyl lysine isopeptide (Lys-Gly) (interchain with G-Cter in ubiquitin). 4 LRR repeats span residues 884-905 (NLQK…ALTS), 912-932 (NLTH…KLLC), 941-962 (KLQM…DLST), and 969-990 (SLRK…TLCE). Cys957 carries S-palmitoyl cysteine lipidation. Lys972 is covalently cross-linked (Glycyl lysine isopeptide (Lys-Gly) (interchain with G-Cter in ubiquitin)). A KFERQ-like motif 4 motif is present at residues 990–994 (EVLKQ). Ser1034 is subject to Phosphoserine.

Belongs to the NLRP family. Sensor component of NLRP3 inflammasomes; inflammasomes are supramolecular complexes that assemble in the cytosol in response to pathogens and other damage-associated signals and play critical roles in innate immunity and inflammation. The core of NLRP3 inflammasomes consists of a signal sensor component (NLRP3), an adapter (PYCARD/ASC), which recruits an effector pro-inflammatory caspase (CASP1 and, possibly, CASP4 and CASP5). Homodecamer; inactive NLRP3 forms homodecameric double-ring cages that hide pyrin domains within NACHT-LRR rings to avoid premature activation. Interacts (via pyrin domain) with PYCARD/ASC (via pyrin domain); interaction is direct. Interacts (via LRR repeat domain) with NEK7 (via N-terminus); the interaction is required for the formation of the complex NLRP3:PYCARD, oligomerization of PYCARD/ASC and activation of CASP1. Interacts (via LRR repeat domain) with NR4A1/Nur77 (via N-terminus); the interaction is direct, requires activation of NR4A1 by its ligands NBRE-containing dsDNA and lipopolysaccharide, and stimulates the association of NLRP3 with NEK7 for non-canonical NLRP3 inflammasome activation. Interacts with CARD8; leading to inhibit formation of the NLRP3 inflammasome. Interacts with MEFV; this interaction targets NLRP3 to degradation by autophagy, hence preventing excessive IL1B- and IL18-mediated inflammation. Interacts with EIF2AK2/PKR; this interaction requires EIF2AK2 activity, is accompanied by EIF2AK2 autophosphorylation and promotes inflammasome assembly in response to specific stimuli. Interacts with GBP5 (via DAPIN domain); this interaction promotes inflammasome assembly in response to microbial and soluble, but not crystalline, agents. Interacts with PML (isoform PML-1) (via the leucine-rich repeat (LRR) domain); PML-mediated increase in NLRP3 inflammasome activation does not depend upon this interaction. Interacts (via NACHT domain) with DHX33 (via DEAH box); NLRP3 activation in presence of cytosolic dsRNA is mediated by DHX33. Interacts (via NACHT and LRR domains) with ARRB2; this interaction is direct and inducible by polyunsaturated fatty acids (PUFAs). Interacts (via NACHT domain) with DDX3X under both LPS-primed and inflammasome-activating conditions. Interacts with IRF4 (via the LRR domain); this interaction is direct and is required for optimal IRF4 binding to IL4 promoter and efficient IL4 transactivation during differentiation of Th2 helper T-cells. Interacts with MAVS; promoting localization to mitochondria and activation of the NLRP3 inflammasome. Interacts with MARK4; promoting localization of NLRP3 to the microtubule organizing center (MTOC). Interacts with TRIM50; this interaction also promotes NLRP3 oligomerization and subsequent inflammasome activation. Interacts with IRGM; preventing NLRP3 inflammasome assembly and promoting NLRP3 degradation. Interacts (via NACHT and LLR domains) with ABHD8; this interaction is enhanced in the presence of NLRP3 inflammasome inducers, such as ATP, nigericin, silica, or alum. Interaction with ABHD8 leads the recruitment of ZDHHC12, hence facilitating NLRP3 palmitoylation and degradation by the chaperone-mediated autophagy pathway (CMA), therefore attenuating NLRP3 inflammasome activation. Post-translationally, phosphorylation by MAPK8/JNK1 increases inflammasome activation by promoting deubiquitination by BRCC3 and NLRP3 homooligomerization. Phosphorylation at Ser-805 by CSNK1A1 prevents inflammasome activation by preventing NEK7 recruitment. Phosphorylation at Ser-5 in the pyrin domain inhibits homomultimerization of NLRP3 and activation of the NLRP3 inflammasome: dephosphorylation by protein phosphatase 2A (PP2A) promotes assembly of the NLRP3 inflammasome. Phosphorylation at Ser-293 by PKD/PRKD1 promotes NLRP3 inflammasome assembly. Phosphorylation by ERK1/MAPK3 promotes NLRP3 inflammasome assembly. Phosphorylation by BTK (at Tyr-134, Tyr-138 and Tyr-166) in the region that mediates binding to phosphatidylinositol phosphate, promotes relocalization of NLRP3 and assembly of the NLRP3 inflammasome. Phosphorylation at Tyr-860 inhibits NLRP3 inflammasome assembly: dephosphorylation by PTPN22 promotes inflammasome activation. Phosphorylated by LATS1 and LATS2 at Ser-263 following palmitoylation by ZDHHC1, promoting its relocalization to the microtubule organizing center (MTOC), where NLRP3 is activated by NEK7, leading to inflammasome assembly and activation. Ubiquitinated; undergoes both 'Lys-48'- and 'Lys-63'-linked polyubiquitination. Ubiquitination does not lead to degradation, but inhibits inflammasome activation. Deubiquitination is catalyzed by BRCC3 and associated with NLRP3 activation and inflammasome assembly. This process can be induced by the activation of Toll-like receptors (by LPS), through a non-transcriptional pathway dependent on the mitochondrial production of reactive oxygen species, and by ATP. Ubiquitinated by TRIM31 via 'Lys-48'-linked ubiquitination, leading to its degradation by the proteasome. Ubiquitinated at Lys-689 by the SCF(FBXL2) complex, leading to its degradation by the proteasome. Ubiquitinated by TRIM35 via 'lys-48' and 'Lys-63'-linked ubiquitination leading to inhibition of NLRP3 inflammasome activation. Undergoes 'Lys-27'-linked polyubiquitination by MARCHF5, leading to NLRP3-NEK7 complex formation and NLRP3 oligomerization. In terms of processing, the disulfide bond in the pyrin domain might play a role in reactive oxygen species-mediated activation. Post-translationally, palmitoylation by ZDHHC12 promotes NLRP3 degradation by the chaperone-mediated autophagy pathway (CMA) and therefore limits NLRP3 inflammasome activation. Interaction with ZDHHC12, and hence NLRP3 palmitoylation, is greatly enhanced by ABHD8. Following palmitoylation, HSPA8/HSC70 recognizes and binds the KFERQ-like motifs on NLRP3 and promotes NLRP3 recruitment to lysosomes, where it is degraded via the chaperone-mediated autophagy pathway in a LAMP2-dependent process. Palmitoylation at Cys-836 and Cys-837 by ZDHHC5 enhances its binding to NEK7 leading to inflammasome assembly and activation. Palmitoylation at Cys-128 and Cys-957 by ZDHHC1 facilitates phosphorylation at Ser-263 by LATS1 and LATS2, promoting its relocalization to the microtubule organizing center (MTOC), where NLRP3 is activated by NEK7, leading to inflammasome assembly and activation. Depalmitoylated by ABHD17A. Degraded via selective autophagy following interaction with IRGM. IRGM promotes NLRP3 recruitment to autophagosome membranes, promoting its SQSTM1/p62-dependent autophagy-dependent degradation.

It is found in the cytoplasm. The protein localises to the cytosol. The protein resides in the inflammasome. Its subcellular location is the cytoskeleton. It localises to the microtubule organizing center. It is found in the golgi apparatus membrane. The protein localises to the endoplasmic reticulum. The protein resides in the mitochondrion. Its subcellular location is the secreted. It localises to the nucleus. The enzyme catalyses ATP + H2O = ADP + phosphate + H(+). Its activity is regulated as follows. Under resting conditions, NLRP3 binds ADP and is autoinhibited. Inactive NLRP3 forms homodecameric double-ring cages that hide pyrin domains within NACHT-LRR rings to avoid premature activation. NLRP3 activation stimuli include extracellular ATP, nigericin, reactive oxygen species, crystals of monosodium urate or cholesterol, amyloid-beta fibers, environmental or industrial particles and nanoparticles, such as asbestos, silica, aluminum salts, cytosolic dsRNA, etc. Almost all stimuli trigger intracellular K(+) efflux. These stimuli lead to membrane perturbations that induce activation of NLRP3. Upon activation, NLRP3 is transported to microtubule organizing center (MTOC), where it is unlocked by NEK7, leading to its relocalization to dispersed trans-Golgi network (dTGN) vesicle membranes and recruitment of PYCARD/ASC for the formation of an active inflammasome complex. NEK7-activated NLRP3 forms a disk-shaped inflammasome. NLRP3 and PYCARD/ASC interact via their respective pyrin domains; interaction initiates speck formation (nucleation) which greatly enhances further addition of soluble PYCARD/ASC molecules to the speck in a prion-like polymerization process. Clustered PYCARD/ASC nucleates the formation of CASP1 filaments through the interaction of their respective CARD domains, acting as a platform for CASP1 polymerization and activation. Active CASP1 then processes IL1B and IL18 precursors, leading to the release of mature cytokines in the extracellular milieu and inflammatory response. NLRP3 inflammasome assembly is inhibited by IRGM, which impedes NLRP3 oligomerization. NLRP3 inflammasome is inhibited by cyclic AMP (cAMP), which directly binds NLRP3; inhibition is relieved by calcium-sensing receptor CASR, which inhibits production of cAMP. Specifically inhibited by sulfonylurea MCC950 (also named CP-456,773, CRID3), a potent and specific small-molecule inhibitor of the NLRP3 inflammasome that acts by preventing ATP hydrolysis. Sensor component of the NLRP3 inflammasome, which mediates inflammasome activation in response to defects in membrane integrity, leading to secretion of inflammatory cytokines IL1B and IL18 and pyroptosis. In response to pathogens and other damage-associated signals that affect the integrity of membranes, initiates the formation of the inflammasome polymeric complex composed of NLRP3, CASP1 and PYCARD/ASC. Recruitment of pro-caspase-1 (proCASP1) to the NLRP3 inflammasome promotes caspase-1 (CASP1) activation, which subsequently cleaves and activates inflammatory cytokines IL1B and IL18 and gasdermin-D (GSDMD), promoting cytokine secretion and pyroptosis. Activation of NLRP3 inflammasome is also required for HMGB1 secretion; stimulating inflammatory responses. Under resting conditions, ADP-bound NLRP3 is autoinhibited. NLRP3 activation stimuli include extracellular ATP, nigericin, reactive oxygen species, crystals of monosodium urate or cholesterol, amyloid-beta fibers, environmental or industrial particles and nanoparticles, such as asbestos, silica, aluminum salts, cytosolic dsRNA, etc. Almost all stimuli trigger intracellular K(+) efflux. These stimuli lead to membrane perturbation and activation of NLRP3. Upon activation, NLRP3 is transported to microtubule organizing center (MTOC), where it is unlocked by NEK7, leading to its relocalization to dispersed trans-Golgi network (dTGN) vesicle membranes and formation of an active inflammasome complex. Associates with dTGN vesicle membranes by binding to phosphatidylinositol 4-phosphate (PtdIns4P). Shows ATPase activity. In terms of biological role, independently of inflammasome activation, regulates the differentiation of T helper 2 (Th2) cells and has a role in Th2 cell-dependent asthma and tumor growth. During Th2 differentiation, required for optimal IRF4 binding to IL4 promoter and for IRF4-dependent IL4 transcription. Binds to the consensus DNA sequence 5'-GRRGGNRGAG-3'. May also participate in the transcription of IL5, IL13, GATA3, CCR3, CCR4 and MAF. This chain is NACHT, LRR and PYD domains-containing protein 3, found in Rattus norvegicus (Rat).